The following is a 289-amino-acid chain: uncharacterized protein (289 aa).

Residue E48 is part of the active site.

Belongs to the PhzF family.

This is an uncharacterized protein from Pasteurella multocida (strain Pm70).